We begin with the raw amino-acid sequence, 599 residues long: Elongation factor 4 (599 aa).

The tr-type G domain maps to 5-187 (SHIRNFSIIA…ELVRLVPPPT (183 aa)). GTP-binding positions include 17–22 (DHGKST) and 134–137 (NKMD).

This sequence belongs to the TRAFAC class translation factor GTPase superfamily. Classic translation factor GTPase family. LepA subfamily.

Its subcellular location is the cell inner membrane. The catalysed reaction is GTP + H2O = GDP + phosphate + H(+). Functionally, required for accurate and efficient protein synthesis under certain stress conditions. May act as a fidelity factor of the translation reaction, by catalyzing a one-codon backward translocation of tRNAs on improperly translocated ribosomes. Back-translocation proceeds from a post-translocation (POST) complex to a pre-translocation (PRE) complex, thus giving elongation factor G a second chance to translocate the tRNAs correctly. Binds to ribosomes in a GTP-dependent manner. This Cellvibrio japonicus (strain Ueda107) (Pseudomonas fluorescens subsp. cellulosa) protein is Elongation factor 4.